Consider the following 212-residue polypeptide: Ferric nitrobindin-like protein (212 aa).

Over residues 1–11 (MTSSDQPERGS) the composition is skewed to basic and acidic residues. Positions 1 to 36 (MTSSDQPERGSGDAAVQAAAERAEQTRGRNVPQFDD) are disordered. The short motif at 64–70 (GVWRGDG) is the GXWXGXG element.

It belongs to the nitrobindin family.

The chain is Ferric nitrobindin-like protein from Saccharopolyspora erythraea (strain ATCC 11635 / DSM 40517 / JCM 4748 / NBRC 13426 / NCIMB 8594 / NRRL 2338).